Here is a 140-residue protein sequence, read N- to C-terminus: ATP synthase epsilon chain (140 aa).

Belongs to the ATPase epsilon chain family. As to quaternary structure, F-type ATPases have 2 components, CF(1) - the catalytic core - and CF(0) - the membrane proton channel. CF(1) has five subunits: alpha(3), beta(3), gamma(1), delta(1), epsilon(1). CF(0) has three main subunits: a, b and c.

The protein resides in the cell inner membrane. Functionally, produces ATP from ADP in the presence of a proton gradient across the membrane. The protein is ATP synthase epsilon chain of Colwellia maris.